A 233-amino-acid polypeptide reads, in one-letter code: Lipoprotein-releasing system ATP-binding protein LolD (233 aa).

Residues 6 to 233 (LQCDNLCKRY…TAELSLMGAE (228 aa)) enclose the ABC transporter domain. 42-49 (GSSGSGKS) lines the ATP pocket.

Belongs to the ABC transporter superfamily. Lipoprotein translocase (TC 3.A.1.125) family. The complex is composed of two ATP-binding proteins (LolD) and two transmembrane proteins (LolC and LolE).

It is found in the cell inner membrane. Functionally, part of the ABC transporter complex LolCDE involved in the translocation of mature outer membrane-directed lipoproteins, from the inner membrane to the periplasmic chaperone, LolA. Responsible for the formation of the LolA-lipoprotein complex in an ATP-dependent manner. The polypeptide is Lipoprotein-releasing system ATP-binding protein LolD (Shigella flexneri).